We begin with the raw amino-acid sequence, 205 residues long: Putative C-type lectin protein FPV001/FPV260 (205 aa).

The C-type lectin domain maps to 84–187 (CPRDWISHNG…CSVRRYLVCK (104 aa)).

The polypeptide is Putative C-type lectin protein FPV001/FPV260 (Fowlpox virus (strain NVSL) (FPV)).